The chain runs to 539 residues: Phosphatidylinositol 4-phosphate 5-kinase type-1 beta (539 aa).

Residues 1-21 are disordered; it reads MSSTAENGDAVPGKQNEEKTY. One can recognise a PIPK domain in the interval 25-395; it reads ASSAIKGAIQ…RFLKFMNSRV (371 aa). Phosphoserine occurs at positions 445, 447, and 448.

Interacts with RAC1, AJUBA, PLD1, PLD2 and ARF1.

The protein resides in the cytoplasm. Its subcellular location is the cytosol. It is found in the cell membrane. The protein localises to the endomembrane system. The enzyme catalyses a 1,2-diacyl-sn-glycero-3-phospho-(1D-myo-inositol 4-phosphate) + ATP = a 1,2-diacyl-sn-glycero-3-phospho-(1D-myo-inositol-4,5-bisphosphate) + ADP + H(+). It catalyses the reaction 1-octadecanoyl-2-(5Z,8Z,11Z,14Z)-eicosatetraenoyl-sn-glycero-3-phospho-1D-myo-inositol 4-phosphate + ATP = 1-octadecanoyl-2-(5Z,8Z,11Z,14Z)-eicosatetraenoyl-sn-glycero-3-phospho-1D-myo-inositol 4,5-bisphosphate + ADP + H(+). The catalysed reaction is 1-octadecanoyl-2-(9Z)-octadecenoyl-sn-glycero-3-phospho-1D-myo-inositol 4-phosphate + ATP = 1-octadecanoyl-2-(9Z)-octadecenoyl-sn-glycero-3-phospho-1D-myo-inositol 4,5-bisphosphate + ADP + H(+). It carries out the reaction 1-octadecanoyl-2-(9Z)-octadecenoyl-sn-glycero-3-phospho-1D-myo-inositol + ATP = 1-octadecanoyl-2-(9Z)-octadecenoyl-sn-glycero-3-phospho-1D-myo-inositol 5-phosphate + ADP + H(+). The enzyme catalyses 1-octadecanoyl-2-(9Z,12Z)-octadecadienoyl-sn-glycero-3-phospho-1D-myo-inositol + ATP = 1-octadecanoyl-2-(9Z,12Z)-octadecadienoyl-sn-glycero-3-phospho-1D-myo-inositol 5-phosphate + ADP + H(+). It catalyses the reaction 1-octadecanoyl-2-(5Z,8Z,11Z,14Z-eicosatetraenoyl)-sn-glycero-3-phospho-(1D-myo-inositol) + ATP = 1-octadecanoyl-2-(5Z,8Z,11Z,14Z)-eicosatetraenoyl-sn-glycero-3-phospho-1D-myo-inositol 5-phosphate + ADP + H(+). The catalysed reaction is 1,2-di-(9Z,12Z)-octadecadienoyl-sn-glycero-3-phospho-1D-myo-inositol + ATP = 1,2-di(9Z,12Z)-octadecadienoyl-sn-glycero-3-phospho-1D-myo-inositol 5-phosphate + ADP + H(+). In terms of biological role, catalyzes the phosphorylation of phosphatidylinositol 4-phosphate (PtdIns(4)P/PI4P) to form phosphatidylinositol 4,5-bisphosphate (PtdIns(4,5)P2/PIP2), a lipid second messenger that regulates several cellular processes such as signal transduction, vesicle trafficking, actin cytoskeleton dynamics, cell adhesion, and cell motility. PtdIns(4,5)P2 can directly act as a second messenger or can be utilized as a precursor to generate other second messengers: inositol 1,4,5-trisphosphate (IP3), diacylglycerol (DAG) or phosphatidylinositol-3,4,5-trisphosphate (PtdIns(3,4,5)P3/PIP3). Mediates RAC1-dependent reorganization of actin filaments. Contributes to the activation of phospholipase PLD2. Together with PIP5K1A, is required, after stimulation by G-protein coupled receptors, for the synthesis of IP3 that will induce stable platelet adhesion. The sequence is that of Phosphatidylinositol 4-phosphate 5-kinase type-1 beta from Rattus norvegicus (Rat).